The primary structure comprises 857 residues: MQEKYLPSEIERAGQARWTADQTYRAADASDRPKYYCLSMFPYPSGKLHMGHVRNYTIGDVLARYHALRGFNVMQPMGWDAFGLPAENAAIANGVPPAQWTYANIDHMRTQLQALGFAIDWSRELATCKPDYYRWEQWLFTRLFEKGVIYKKMATVNWDPVDQTVLANEQVIDGRGWRSGALVEKRDIPMYFFRITQYADELLSGLDTLPGWPERVKTMQANWIGKSTGVRLAFPYELDGSQEKLWVFTTRADTLMGVTFVAVAAEHPLAARAAENNPELAAFVAECKQGSVAEADMATMEKKGMDTGFKVTHPLTGEEVPVWVGNYVLMSYGEGAVMAVPAHDERDFGFAKKYDLPIKQVIGVDGETFSLDAWAEWYGDKTRGQCVNSGKYDRLGYEAAVDAIAADLAAKGLGEKKTQFRLRDWGISRQRYWGCPIPIIHCETCGDVPVPAEQLPVVLPEDVVPDGSGNPLNKRADFVNCTCPACGAPARRETDTMDTFVESSWYYARYACPDYADGMLDARADQWLPVDQYIGGIEHAILHLLYARFFHKLMRDEGLVASDEPFANLLTQGMVVADTYYREDAGGKKTWFNPADVETKDGVATLRADGKPVVVGGTEKMSKSKNNGVDPQALIDQYGADTARLFTMFAAPPEQSLEWSDAGVEGAHRFLRRLWKTVYEHVQAGPVVTRAGGALPEPLKALRRQLHQTIQKVGDDIERRKQFNTAIAAVMELMNALAKLDGMDADTRAVRQETLEAVAVLLAPIVPHVGEAIHAELRPGAAMRWPEVDAAALVQDEIELMLQVNGKLRGQIRVAAGADKPAIEAAALASEAVQKYLAGQTPKKVVVVPGRLVNIVA.

The 'HIGH' region signature appears at P42–H52. Residues K620–S624 carry the 'KMSKS' region motif. K623 contacts ATP.

It belongs to the class-I aminoacyl-tRNA synthetase family.

Its subcellular location is the cytoplasm. The catalysed reaction is tRNA(Leu) + L-leucine + ATP = L-leucyl-tRNA(Leu) + AMP + diphosphate. This is Leucine--tRNA ligase from Thiobacillus denitrificans (strain ATCC 25259 / T1).